The following is a 312-amino-acid chain: Glyoxylate/hydroxypyruvate reductase A (312 aa).

Arg227 is an active-site residue. Catalysis depends on His275, which acts as the Proton donor.

It belongs to the D-isomer specific 2-hydroxyacid dehydrogenase family. GhrA subfamily.

It is found in the cytoplasm. The enzyme catalyses glycolate + NADP(+) = glyoxylate + NADPH + H(+). It catalyses the reaction (R)-glycerate + NAD(+) = 3-hydroxypyruvate + NADH + H(+). It carries out the reaction (R)-glycerate + NADP(+) = 3-hydroxypyruvate + NADPH + H(+). Functionally, catalyzes the NADPH-dependent reduction of glyoxylate and hydroxypyruvate into glycolate and glycerate, respectively. In Salmonella heidelberg (strain SL476), this protein is Glyoxylate/hydroxypyruvate reductase A.